We begin with the raw amino-acid sequence, 266 residues long: Small ribosomal subunit protein uS2 (266 aa).

The disordered stretch occupies residues 227 to 266 (GVSFTEETPSEPIQSDSSEEEEGSLDISDLFEDTDLKEEE). Over residues 231–240 (TEETPSEPIQ) the composition is skewed to polar residues. Residues 243-266 (SSEEEEGSLDISDLFEDTDLKEEE) are compositionally biased toward acidic residues.

It belongs to the universal ribosomal protein uS2 family.

The sequence is that of Small ribosomal subunit protein uS2 from Pseudothermotoga lettingae (strain ATCC BAA-301 / DSM 14385 / NBRC 107922 / TMO) (Thermotoga lettingae).